The primary structure comprises 206 residues: Adenylate kinase (206 aa).

The segment at 1-21 (MSQPKILLLGAPGAGKGTQSS) is disordered. 13 to 18 (GAGKGT) contacts ATP. The segment at 33–61 (TTGDALRANKDMETEHGTPREFMEAGELV) is NMP. Residues T34, R39, 59–61 (ELV), 84–87 (GYPR), and Q91 contribute to the AMP site. Positions 120–153 (GRRMDPETGDIYHTEFNMPDDEEVRERLVQRDDD) are LID. Residues R121 and 130–131 (IY) each bind ATP. Positions 150 and 161 each coordinate AMP. A189 serves as a coordination point for ATP.

The protein belongs to the adenylate kinase family. In terms of assembly, monomer.

It localises to the cytoplasm. The catalysed reaction is AMP + ATP = 2 ADP. The protein operates within purine metabolism; AMP biosynthesis via salvage pathway; AMP from ADP: step 1/1. In terms of biological role, catalyzes the reversible transfer of the terminal phosphate group between ATP and AMP. Plays an important role in cellular energy homeostasis and in adenine nucleotide metabolism. The chain is Adenylate kinase from Natronomonas pharaonis (strain ATCC 35678 / DSM 2160 / CIP 103997 / JCM 8858 / NBRC 14720 / NCIMB 2260 / Gabara) (Halobacterium pharaonis).